We begin with the raw amino-acid sequence, 439 residues long: Xylose isomerase (439 aa).

Residues His101 and Asp104 contribute to the active site. Mg(2+) contacts are provided by Glu232, Glu268, His271, Asp296, Asp307, Asp309, and Asp339.

Belongs to the xylose isomerase family. As to quaternary structure, homotetramer. Mg(2+) is required as a cofactor.

The protein resides in the cytoplasm. It catalyses the reaction alpha-D-xylose = alpha-D-xylulofuranose. The protein is Xylose isomerase of Pectobacterium atrosepticum (strain SCRI 1043 / ATCC BAA-672) (Erwinia carotovora subsp. atroseptica).